A 595-amino-acid chain; its full sequence is Apolipoprotein N-acyltransferase 2 (595 aa).

The next 5 helical transmembrane spans lie at 30-50, 63-83, 95-115, 167-187, and 210-230; these read FLAF…FGFF, LFFH…HWII, VVAI…FPIF, AEIT…YTLF, and FITL…FLFK. The CN hydrolase domain maps to 241–555; it reads LNVLIVQPDA…AEALSETIDV (315 aa). The active-site Proton acceptor is the Glu293. Lys372 is an active-site residue. Cys463 functions as the Nucleophile in the catalytic mechanism. Residues 569–589 traverse the membrane as a helical segment; sequence LIPWLMLFLTGIYYLNLLIGI.

It belongs to the CN hydrolase family. Apolipoprotein N-acyltransferase subfamily.

It is found in the cell inner membrane. The enzyme catalyses N-terminal S-1,2-diacyl-sn-glyceryl-L-cysteinyl-[lipoprotein] + a glycerophospholipid = N-acyl-S-1,2-diacyl-sn-glyceryl-L-cysteinyl-[lipoprotein] + a 2-acyl-sn-glycero-3-phospholipid + H(+). Its pathway is protein modification; lipoprotein biosynthesis (N-acyl transfer). Catalyzes the phospholipid dependent N-acylation of the N-terminal cysteine of apolipoprotein, the last step in lipoprotein maturation. The polypeptide is Apolipoprotein N-acyltransferase 2 (Leptospira interrogans serogroup Icterohaemorrhagiae serovar copenhageni (strain Fiocruz L1-130)).